Here is a 310-residue protein sequence, read N- to C-terminus: DDRGK domain-containing protein 1 (310 aa).

Residues 1–21 (MAAIIYLAIAAVASILLFVAV) traverse the membrane as a helical segment. Residues 22–310 (KLLSTDTKTE…DSPAEISVNA (289 aa)) lie on the Cytoplasmic side of the membrane. Disordered stretches follow at residues 38-85 (VGEL…DEYQ) and 110-162 (KAEK…LKEE). Over residues 52–70 (PRARARRGLRNKTNRSKTQ) the composition is skewed to basic residues. Over residues 76-85 (DYDDYDDEYQ) the composition is skewed to acidic residues.

Belongs to the DDRGK1 family.

The protein localises to the endoplasmic reticulum membrane. In terms of biological role, substrate adapter for ufmylation, the covalent attachment of the ubiquitin-like modifier UFM1 to substrate proteins. This chain is DDRGK domain-containing protein 1, found in Trichoplax adhaerens (Trichoplax reptans).